The following is a 208-amino-acid chain: Translation initiation factor IF-3 (208 aa).

This sequence belongs to the IF-3 family. In terms of assembly, monomer.

The protein localises to the cytoplasm. Its function is as follows. IF-3 binds to the 30S ribosomal subunit and shifts the equilibrium between 70S ribosomes and their 50S and 30S subunits in favor of the free subunits, thus enhancing the availability of 30S subunits on which protein synthesis initiation begins. The chain is Translation initiation factor IF-3 from Parabacteroides distasonis (strain ATCC 8503 / DSM 20701 / CIP 104284 / JCM 5825 / NCTC 11152).